The sequence spans 1197 residues: Pleckstrin homology domain-containing family A member 7 (1197 aa).

2 consecutive WW domains span residues 8–41 and 53–86; these read DTLPDNGSYGVCRDGRVFFIDDEARATTWLHPRT and SDLPSGWEEGFTKEGASFFIDHNQRTTTFIHPVT. Positions 98 to 148 are disordered; the sequence is LQDQPGGRMLKQPSSTISEASTTVTTSTVDSTSGSKGSRSSGRVHSFGKRD. Residues 111-140 show a composition bias toward low complexity; it reads SSTISEASTTVTTSTVDSTSGSKGSRSSGR. The region spanning 158–257 is the PH domain; sequence PVVVRGWLYK…WVRAMNQAAL (100 aa). Disordered stretches follow at residues 348–384, 423–467, and 508–577; these read PGSTPPSRVASRAPSRAVSTPPVVQRNGTPIEQNGMP, LVST…QLPS, and FRHG…TVRP. The span at 528–546 shows a compositional bias: low complexity; it reads VSSTRNNSDVSRSVSVPPT. Residues 568–577 show a composition bias toward basic and acidic residues; it reads TPAERVTVRP. Positions 678–799 form a coiled coil; that stretch reads DKILQELEFR…RIEDVMTGLS (122 aa). Disordered regions lie at residues 830-928 and 1032-1064; these read SRCM…SYSN and HQRALVRERKRNLSQGERHHSRASTRPVNSDPG. Over residues 913 to 924 the composition is skewed to basic and acidic residues; the sequence is RQSDERKRDRES. Positions 1016–1044 form a coiled coil; it reads QRVRMSVEEQLERMKRHQRALVRERKRNL. Over residues 1032 to 1043 the composition is skewed to basic residues; that stretch reads HQRALVRERKRN.

It localises to the cell junction. It is found in the adherens junction. Its subcellular location is the cytoplasm. The protein resides in the cytoskeleton. The protein localises to the microtubule organizing center. It localises to the centrosome. In terms of biological role, required for zonula adherens biogenesis and maintenance. This Danio rerio (Zebrafish) protein is Pleckstrin homology domain-containing family A member 7 (plekha7).